The primary structure comprises 344 residues: Dihydroorotase (344 aa).

Residues His13 and His15 each contribute to the Zn(2+) site. Residues 15-17 (HVR) and Asn41 contribute to the substrate site. Zn(2+) contacts are provided by Lys99, His136, and His174. N6-carboxylysine is present on Lys99. His136 serves as a coordination point for substrate. Leu219 is a binding site for substrate. Residue Asp247 coordinates Zn(2+). Residue Asp247 is part of the active site. Substrate is bound by residues His251 and Ala263.

The protein belongs to the metallo-dependent hydrolases superfamily. DHOase family. Class II DHOase subfamily. In terms of assembly, homodimer. The cofactor is Zn(2+).

It catalyses the reaction (S)-dihydroorotate + H2O = N-carbamoyl-L-aspartate + H(+). The protein operates within pyrimidine metabolism; UMP biosynthesis via de novo pathway; (S)-dihydroorotate from bicarbonate: step 3/3. Catalyzes the reversible cyclization of carbamoyl aspartate to dihydroorotate. The protein is Dihydroorotase of Azoarcus sp. (strain BH72).